Here is a 28-residue protein sequence, read N- to C-terminus: Dermaseptin-2 (28 aa).

Gln28 is modified (glutamine amide).

Belongs to the frog skin active peptide (FSAP) family. Dermaseptin subfamily. Expressed by the skin glands.

The protein localises to the secreted. In terms of biological role, antimicrobial peptide with activity against the Gram-positive bacterium S.aureus, and the Gram-negative bacteria E.coli and P.aeruginosa. Probably acts by disturbing membrane functions with its amphipathic structure. Has an activity of stimulation of insulin release, which may protect the species from being eaten by predators by causing fatal hypoglycemia. Has hemolytic activity (60% hemolysis at 128 ug/ml). The protein is Dermaseptin-2 of Phyllomedusa tarsius (Brownbelly leaf frog).